Consider the following 349-residue polypeptide: 5-deoxyribose 1-phosphate isomerase (349 aa).

Residues 49–51 (RGA), Arg92, and Gln199 each bind substrate. Asp240 serves as the catalytic Proton donor. 250–251 (NK) is a substrate binding site.

This sequence belongs to the EIF-2B alpha/beta/delta subunits family. DrdI subfamily.

The enzyme catalyses 5-deoxy-alpha-D-ribose 1-phosphate = 5-deoxy-D-ribulose 1-phosphate. It participates in carbohydrate degradation. In terms of biological role, catalyzes the isomerization of 5-deoxy-alpha-D-ribose 1-phosphate to 5-deoxy-D-ribulose 1-phosphate, as part of a 5-deoxyribose salvage pathway that recycles this toxic radical SAM enzyme by-product to mainstream metabolites. The polypeptide is 5-deoxyribose 1-phosphate isomerase (Clostridium botulinum (strain Langeland / NCTC 10281 / Type F)).